Consider the following 348-residue polypeptide: tRNA N6-adenosine threonylcarbamoyltransferase (348 aa).

Fe cation is bound by residues His111 and His115. Substrate-binding positions include 134–138, Asp167, Gly180, and Asn277; that span reads LISGG. Asp305 serves as a coordination point for Fe cation.

Belongs to the KAE1 / TsaD family. Fe(2+) is required as a cofactor.

It localises to the cytoplasm. It catalyses the reaction L-threonylcarbamoyladenylate + adenosine(37) in tRNA = N(6)-L-threonylcarbamoyladenosine(37) in tRNA + AMP + H(+). In terms of biological role, required for the formation of a threonylcarbamoyl group on adenosine at position 37 (t(6)A37) in tRNAs that read codons beginning with adenine. Is involved in the transfer of the threonylcarbamoyl moiety of threonylcarbamoyl-AMP (TC-AMP) to the N6 group of A37, together with TsaE and TsaB. TsaD likely plays a direct catalytic role in this reaction. The chain is tRNA N6-adenosine threonylcarbamoyltransferase from Haemophilus ducreyi (strain 35000HP / ATCC 700724).